The chain runs to 431 residues: Large envelope protein (431 aa).

Gly2 is lipidated: N-myristoyl glycine; by host. The pre-S1 stretch occupies residues 2 to 148; it reads GNNIKVTFNP…PPLRDTHPHL (147 aa). The interval 2–207 is pre-S; that stretch reads GNNIKVTFNP…PSTTGDPALS (206 aa). Residues 2–214 lie on the Virion surface; in external conformation side of the membrane; it reads GNNIKVTFNP…ALSPEMSPSS (213 aa). Topologically, residues 2–286 are intravirion; in internal conformation; sequence GNNIKVTFNP…NGFRWMYLRR (285 aa). Asn3 is a glycosylation site (N-linked (GlcNAc...) asparagine). The disordered stretch occupies residues 115 to 146; the sequence is IPRGLVPPQTPTNRDQGRKPTPPTPPLRDTHP. Positions 149–207 are pre-S2; that stretch reads TMKNQTFRLQGFVDGLRDLTTTERYHNAYGDPFTTLSPVVPTVSTILSPPSTTGDPALS. A helical membrane pass occupies residues 215-235; sequence LLGLLAGLQVVYFLWTKILTI. Residues 236-286 lie on the Intravirion; in external conformation side of the membrane; sequence AQNLDWWWTSLSFPGGIPECTGQNSQFQTCKHLPTSCPPTCNGFRWMYLRR. Residues 287 to 307 form a helical membrane-spanning segment; it reads FIIYLLVLLLCLIFLLVLLDW. The Virion surface portion of the chain corresponds to 308 to 379; that stretch reads KGLIPVCPLQ…WALARFSWLN (72 aa). Asn351 is a glycosylation site (N-linked (GlcNAc...) asparagine; by host). Residues 380–400 traverse the membrane as a helical segment; it reads LLVPLLQWLGGISLIAWFLLI. The Intravirion portion of the chain corresponds to 401–406; the sequence is WMIWFW. The chain crosses the membrane as a helical span at residues 407-429; the sequence is GPALLSILPPFIPIFVLFFLIWV. The Virion surface portion of the chain corresponds to 430-431; sequence YI.

Belongs to the orthohepadnavirus major surface antigen family. As to quaternary structure, in its internal form (Li-HBsAg), interacts with the capsid protein and with the isoform S. Interacts with host chaperone CANX. Associates with host chaperone CANX through its pre-S2 N glycan; this association may be essential for isoform M proper secretion. In terms of assembly, interacts with isoform L. Interacts with the antigens of satellite virus HDV (HDVAgs); this interaction is required for encapsidation of HDV genomic RNA. In terms of processing, isoform M is N-terminally acetylated by host at a ratio of 90%, and N-glycosylated by host at the pre-S2 region. Post-translationally, myristoylated.

The protein resides in the virion membrane. In terms of biological role, the large envelope protein exists in two topological conformations, one which is termed 'external' or Le-HBsAg and the other 'internal' or Li-HBsAg. In its external conformation the protein attaches the virus to cell receptors and thereby initiating infection. This interaction determines the species specificity and liver tropism. This attachment induces virion internalization predominantly through caveolin-mediated endocytosis. The large envelope protein also assures fusion between virion membrane and endosomal membrane. In its internal conformation the protein plays a role in virion morphogenesis and mediates the contact with the nucleocapsid like a matrix protein. Functionally, the middle envelope protein plays an important role in the budding of the virion. It is involved in the induction of budding in a nucleocapsid independent way. In this process the majority of envelope proteins bud to form subviral lipoprotein particles of 22 nm of diameter that do not contain a nucleocapsid. The sequence is that of Large envelope protein from Woodchuck hepatitis B virus (isolate 59) (WHV).